The primary structure comprises 236 residues: UPF0257 lipoprotein YnfC (236 aa).

An N-terminal signal peptide occupies residues 1 to 16 (MKYKLLPCLLAIFLTG). A lipid anchor (N-palmitoyl cysteine) is attached at Cys-17. Cys-17 carries the S-diacylglycerol cysteine lipid modification.

The protein belongs to the UPF0257 family.

The protein resides in the cell membrane. The polypeptide is UPF0257 lipoprotein YnfC (ynfC) (Shigella flexneri).